The sequence spans 949 residues: Sensor histidine kinase RcsC (949 aa).

At 1-19 the chain is on the cytoplasmic side; the sequence is MKYLASFRTTLKASRYMFR. The helical transmembrane segment at 20–41 threads the bilayer; sequence ALALVLWLLIAFSSVFYIVNAL. The Periplasmic segment spans residues 42–313; sequence HQRESEIRQE…PVDKVLERIR (272 aa). A helical membrane pass occupies residues 314–335; sequence MVILNAILLNVLAGAALFTLAR. The Cytoplasmic portion of the chain corresponds to 336 to 949; sequence MYERRIFIPA…AERVRKSRES (614 aa). The PAS domain occupies 357–425; that stretch reads QFNRKIVASA…VLTSNNTNLQ (69 aa). A Histidine kinase domain is found at 476–692; the sequence is TVSHELRTPL…QFTVRIPLYG (217 aa). H479 bears the Phosphohistidine; by autocatalysis mark. In terms of domain architecture, ABL spans 705–805; that stretch reads SGKRCWLAVR…ARIYLIEMES (101 aa). One can recognise a Response regulatory domain in the interval 826 to 940; it reads MILVVDDHPI…VIKQTLTVYA (115 aa). 4-aspartylphosphate is present on D875.

This sequence belongs to the RcsC family. Interacts with RcsD. In terms of processing, autophosphorylated. Activation probably requires a transfer of a phosphate group from a His in the transmitter domain to an Asp in the receiver domain.

It localises to the cell inner membrane. It catalyses the reaction ATP + protein L-histidine = ADP + protein N-phospho-L-histidine.. Functionally, component of the Rcs signaling system, which controls transcription of numerous genes. RcsC functions as a membrane-associated protein kinase that phosphorylates RcsD in response to environmental signals. The phosphoryl group is then transferred to the response regulator RcsB. Involved in regulation of K30 capsular polysaccharide synthesis. This chain is Sensor histidine kinase RcsC, found in Escherichia coli.